We begin with the raw amino-acid sequence, 332 residues long: Ketol-acid reductoisomerase (NADP(+)) (332 aa).

The KARI N-terminal Rossmann domain occupies 2–182 (AKVYIDKDAS…GATRAGVIET (181 aa)). NADP(+)-binding positions include 25-28 (YGSQ), Ser-53, and 83-86 (DMVQ). His-108 is an active-site residue. Gly-134 is an NADP(+) binding site. The KARI C-terminal knotted domain occupies 183 to 328 (TFKEETETDL…RQIREISLRG (146 aa)). Mg(2+)-binding residues include Asp-191, Glu-195, Glu-227, and Glu-231. Ser-252 is a substrate binding site.

It belongs to the ketol-acid reductoisomerase family. Requires Mg(2+) as cofactor.

It carries out the reaction (2R)-2,3-dihydroxy-3-methylbutanoate + NADP(+) = (2S)-2-acetolactate + NADPH + H(+). The enzyme catalyses (2R,3R)-2,3-dihydroxy-3-methylpentanoate + NADP(+) = (S)-2-ethyl-2-hydroxy-3-oxobutanoate + NADPH + H(+). It participates in amino-acid biosynthesis; L-isoleucine biosynthesis; L-isoleucine from 2-oxobutanoate: step 2/4. It functions in the pathway amino-acid biosynthesis; L-valine biosynthesis; L-valine from pyruvate: step 2/4. In terms of biological role, involved in the biosynthesis of branched-chain amino acids (BCAA). Catalyzes an alkyl-migration followed by a ketol-acid reduction of (S)-2-acetolactate (S2AL) to yield (R)-2,3-dihydroxy-isovalerate. In the isomerase reaction, S2AL is rearranged via a Mg-dependent methyl migration to produce 3-hydroxy-3-methyl-2-ketobutyrate (HMKB). In the reductase reaction, this 2-ketoacid undergoes a metal-dependent reduction by NADPH to yield (R)-2,3-dihydroxy-isovalerate. In Sulfurisphaera tokodaii (strain DSM 16993 / JCM 10545 / NBRC 100140 / 7) (Sulfolobus tokodaii), this protein is Ketol-acid reductoisomerase (NADP(+)).